Reading from the N-terminus, the 663-residue chain is (R)-specific secondary-alkylsulfatase (663 aa).

Residues 1-28 (MSRFIRASQRRTLLATLIAATLAQPLLA) form the signal peptide. Histidine 179, histidine 181, aspartate 183, and histidine 184 together coordinate Zn(2+). Position 232 (glutamine 232) interacts with sulfate. Residues glutamate 291 and aspartate 310 each contribute to the Zn(2+) site. Sulfate contacts are provided by residues 318 to 323 (NLLTPR) and arginine 328. Histidine 355 contacts Zn(2+). Tyrosine 417 contacts sulfate.

This sequence belongs to the metallo-beta-lactamase superfamily. Type III sulfatase family. Homodimer.

It catalyses the reaction an (R)-secondary-alkyl sulfate + H2O = an (S)-secondary-alcohol + sulfate.. Its function is as follows. Alkylsulfatase that catalyzes the enantioselective hydrolysis of secondary-alkylsulfates with strict inversion of configuration, leading to the formation of homochiral (S)-configurated alcohols and nonreacted sulfate esters. The substrate spectrum includes a range of linear, branched or cyclic sec-alkylsulfates. Can use sec-alkylsulfate esters bearing aromatic, olefinic and acetylenic moieties. Acts by cleaving the C-O bond, resulting in inversion at the carbon. The chain is (R)-specific secondary-alkylsulfatase from Pseudomonas sp.